We begin with the raw amino-acid sequence, 667 residues long: Transcription factor 4 (667 aa).

Residues 1–83 (MHHQQRMAAL…GTPYDHMTSR (83 aa)) form an essential for MYOD1 inhibition region. Residues 18-26 (DLLDFSAMF) carry the 9aaTAD motif. Disordered regions lie at residues 24 to 245 (AMFS…LGNS), 263 to 321 (LSYP…SQTG), 336 to 379 (HTNN…EGPL), 466 to 570 (SLLP…MANN), and 634 to 667 (KRRE…MGQM). Residues 29–49 (PVSSGKNGPTSLASGHFTGSN) are compositionally biased toward polar residues. Phosphoserine is present on residues S66, S87, and S92. Composition is skewed to polar residues over residues 107 to 126 (GSYS…QQSL), 137 to 155 (GTLS…SSNN), 205 to 216 (KPATSTFPSSFF), and 266 to 306 (PSHS…TDSI). Residues 337–348 (TNNSFSSNPSTP) show a composition bias toward low complexity. Residues 365-374 (NGGQASSSPN) are compositionally biased toward polar residues. At S372 the chain carries Phosphoserine. The leucine-zipper stretch occupies residues 379–400 (LHSLQSRIEDRLERLDDAIHVL). Low complexity-rich tracts occupy residues 467–480 (LLPN…LPVQ) and 503–512 (GQSVSSGSSE). At S515 the chain carries Phosphoserine. Basic and acidic residues-rich tracts occupy residues 527–542 (KSSE…KDIK) and 555–570 (PEQK…MANN). Residues 564–617 (ERRMANNARERLRVRDINEAFKELGRMVQLHLKSDKPQTKLLILHQAVAVILSL) form the bHLH domain. The interval 619-642 (QQVRERNLNPKAACLKRREEEKVS) is class A specific domain.

As to quaternary structure, efficient DNA binding requires dimerization with another bHLH protein. Forms homo- or heterooligomers with myogenin. Interacts with HIVEP2. Interacts with NEUROD2. Interacts with AGBL1. Interacts with BHLHA9. In terms of tissue distribution, expressed in adult heart, brain, placenta, skeletal muscle and to a lesser extent in the lung. In developing embryonic tissues, expression mostly occurs in the brain.

Its subcellular location is the nucleus. Its function is as follows. Transcription factor that binds to the immunoglobulin enhancer Mu-E5/KE5-motif. Involved in the initiation of neuronal differentiation. Activates transcription by binding to the E box (5'-CANNTG-3'). Binds to the E-box present in the somatostatin receptor 2 initiator element (SSTR2-INR) to activate transcription. Preferentially binds to either 5'-ACANNTGT-3' or 5'-CCANNTGG-3'. This chain is Transcription factor 4 (TCF4), found in Homo sapiens (Human).